The primary structure comprises 1342 residues: DNA-directed RNA polymerase subunit beta (1342 aa).

The protein belongs to the RNA polymerase beta chain family. The RNAP catalytic core consists of 2 alpha, 1 beta, 1 beta' and 1 omega subunit. When a sigma factor is associated with the core the holoenzyme is formed, which can initiate transcription.

The catalysed reaction is RNA(n) + a ribonucleoside 5'-triphosphate = RNA(n+1) + diphosphate. In terms of biological role, DNA-dependent RNA polymerase catalyzes the transcription of DNA into RNA using the four ribonucleoside triphosphates as substrates. The sequence is that of DNA-directed RNA polymerase subunit beta from Colwellia psychrerythraea (strain 34H / ATCC BAA-681) (Vibrio psychroerythus).